Reading from the N-terminus, the 499-residue chain is Glucose-6-phosphate exchanger SLC37A2 (499 aa).

A helical membrane pass occupies residues 21 to 40 (YRGFIIVMTFLFYTCYHLSR). N-linked (GlcNAc...) asparagine glycans are attached at residues asparagine 53, asparagine 62, and asparagine 66. The next 11 helical transmembrane spans lie at 86-106 (GSLD…SGIF), 116-136 (LSGG…GYYW), 143-163 (YYIL…PAVV), 187-207 (AVGN…AWGL), 208-228 (SFIV…FFLV), 302-322 (LCLL…PLYI), 334-354 (GDLS…AGGI), 362-382 (AITC…YNYF), 391-411 (IAML…ITTA), 434-454 (AIID…AGVL), and 458-478 (GWNY…LLLA).

Belongs to the major facilitator superfamily. Organophosphate:Pi antiporter (OPA) (TC 2.A.1.4) family.

It localises to the endoplasmic reticulum membrane. The catalysed reaction is D-glucose 6-phosphate(in) + phosphate(out) = D-glucose 6-phosphate(out) + phosphate(in). Inorganic phosphate and glucose-6-phosphate antiporter. May transport cytoplasmic glucose-6-phosphate into the lumen of the endoplasmic reticulum and translocate inorganic phosphate into the opposite direction. This Xenopus laevis (African clawed frog) protein is Glucose-6-phosphate exchanger SLC37A2.